Consider the following 213-residue polypeptide: Probable nicotinate-nucleotide adenylyltransferase (213 aa).

This sequence belongs to the NadD family.

The enzyme catalyses nicotinate beta-D-ribonucleotide + ATP + H(+) = deamido-NAD(+) + diphosphate. It participates in cofactor biosynthesis; NAD(+) biosynthesis; deamido-NAD(+) from nicotinate D-ribonucleotide: step 1/1. Its function is as follows. Catalyzes the reversible adenylation of nicotinate mononucleotide (NaMN) to nicotinic acid adenine dinucleotide (NaAD). The polypeptide is Probable nicotinate-nucleotide adenylyltransferase (Shigella boydii serotype 4 (strain Sb227)).